The primary structure comprises 217 residues: Small ribosomal subunit protein uS3c (217 aa).

A KH type-2 domain is found at 47 to 119 (VRTHIKSSSN…KLHIAIEKVA (73 aa)).

This sequence belongs to the universal ribosomal protein uS3 family. Part of the 30S ribosomal subunit.

It localises to the plastid. It is found in the chloroplast. The polypeptide is Small ribosomal subunit protein uS3c (rps3) (Pinus koraiensis (Korean pine)).